Here is a 1040-residue protein sequence, read N- to C-terminus: FHF complex subunit HOOK-interacting protein 1A (1040 aa).

Disordered stretches follow at residues 555–613, 653–746, and 769–808; these read PQQL…PIDP, SEDM…AAHP, and LMEQNYPTPDPLLLTKEEEGKEESKGEKEKEGKKELEDEE. Residues 653–664 are compositionally biased toward basic and acidic residues; the sequence is SEDMKDSQEEAA. A compositionally biased stretch (polar residues) spans 677 to 690; it reads VPINNGPLLSTQPE. Composition is skewed to basic and acidic residues over residues 696–719 and 783–804; these read EWNRDNSDPFHSEPKEPKQEREPE and TKEEEGKEESKGEKEKEGKKEL.

This sequence belongs to the FHIP family. In terms of assembly, may be a component of the FTS/Hook/FHIP complex (FHF complex), composed of AKTIP/FTS, FHIP1B, and one or more members of the Hook family of proteins HOOK1, HOOK2, and HOOK3. May interact directly with AKTIP/FTS.

Probable component of the FTS/Hook/FHIP complex (FHF complex). FHF complex promotes the distribution of AP-4 complex to the perinuclear area of the cell. This is FHF complex subunit HOOK-interacting protein 1A from Homo sapiens (Human).